The chain runs to 201 residues: dTTP/UTP pyrophosphatase (201 aa).

The active-site Proton acceptor is aspartate 79.

Belongs to the Maf family. YhdE subfamily. A divalent metal cation serves as cofactor.

The protein localises to the cytoplasm. The enzyme catalyses dTTP + H2O = dTMP + diphosphate + H(+). It catalyses the reaction UTP + H2O = UMP + diphosphate + H(+). Its function is as follows. Nucleoside triphosphate pyrophosphatase that hydrolyzes dTTP and UTP. May have a dual role in cell division arrest and in preventing the incorporation of modified nucleotides into cellular nucleic acids. The chain is dTTP/UTP pyrophosphatase from Hahella chejuensis (strain KCTC 2396).